A 181-amino-acid chain; its full sequence is Protein FAM237A (181 aa).

A signal peptide spans 1-33 (MADPGNRGGIHRPLSFTCSLLIVGMCCVSPFFC). The residue at position 113 (Leu-113) is a Leucine amide. Residues 114-181 (GRRQLVGEEE…GKVNLEIKRK (68 aa)) constitute a propeptide, removed in the mature form.

Post-translationally, the active form requires C-terminal amidation and disulfide bond formation. In terms of tissue distribution, expressed in the pituitary, testis, and heart and at lower levels in the brain.

It localises to the secreted. Functionally, may be capable of activating GPR83 via the GNAQ signaling pathway. The protein is Protein FAM237A of Homo sapiens (Human).